Here is a 314-residue protein sequence, read N- to C-terminus: Olfactory receptor 5D14 (314 aa).

The Extracellular portion of the chain corresponds to 1–27 (MMMVLRNLSMEPTFALLGFTDYPKLQI). Asn-7 is a glycosylation site (N-linked (GlcNAc...) asparagine). A helical transmembrane segment spans residues 28 to 48 (PLFLVFLLMYVITVVGNLGMI). Over 49–56 (IIIKINPK) the chain is Cytoplasmic. A helical transmembrane segment spans residues 57-77 (FHTPMYFFLSHLSFVDFCYSS). At 78-101 (IVTPKLLENLVMADKSIFYFSCMM) the chain is on the extracellular side. The chain crosses the membrane as a helical span at residues 102–122 (QYFLSCTAVVTESFLLAVMAY). Residues 123–141 (DRFVAICNPLLYTVAMSQR) are Cytoplasmic-facing. Residues 142 to 162 (LCALLVAGSYLWGMFGPLVLL) traverse the membrane as a helical segment. Topologically, residues 163-198 (CYALRLNFSGPNVINHFFCEYTALISVSGSDILIPH) are extracellular. An N-linked (GlcNAc...) asparagine glycan is attached at Asn-169. The chain crosses the membrane as a helical span at residues 199 to 219 (LLLFSFATFNEMCTLLIILTS). Residues 220–239 (YVFIFVTVLKIRSVSGRHKA) are Cytoplasmic-facing. Residues 240-260 (FSTWASHLTSITIFHGTILFL) form a helical membrane-spanning segment. Topologically, residues 261 to 273 (YCVPNSKNSRQTV) are extracellular. A helical membrane pass occupies residues 274 to 294 (KVASVFYTVVNPMLNPLIYSL). The Cytoplasmic portion of the chain corresponds to 295–314 (RNKDVKDAFWKLIHTQVPFH).

Belongs to the G-protein coupled receptor 1 family.

Its subcellular location is the cell membrane. Its function is as follows. Odorant receptor. This chain is Olfactory receptor 5D14 (OR5D14), found in Homo sapiens (Human).